Reading from the N-terminus, the 353-residue chain is Protein Wnt-11b-1 (353 aa).

An N-terminal signal peptide occupies residues Met-1–Ala-22. Asn-31, Asn-38, and Asn-88 each carry an N-linked (GlcNAc...) asparagine glycan. Intrachain disulfides connect Cys-78–Cys-89, Cys-128–Cys-136, Cys-138–Cys-155, Cys-208–Cys-222, and Cys-210–Cys-217. Ser-214 carries the O-palmitoleoyl serine; by PORCN lipid modification. Tyr-274 and Tyr-281 each carry sulfotyrosine. 6 disulfide bridges follow: Cys-282–Cys-313, Cys-298–Cys-308, Cys-312–Cys-352, Cys-328–Cys-343, Cys-330–Cys-340, and Cys-335–Cys-336. An N-linked (GlcNAc...) asparagine glycan is attached at Asn-299.

Belongs to the Wnt family. In terms of assembly, homodimer. Secreted homodimers form a complex with wnt5a homodimers; tyrosine sulfation of both wnt11 and wnt5a by tpst1 is required for this interaction. Interacts with the transmembrane receptor fzd7/fz7. Interacts with lrp6 and ryk. Interacts with tdgf1/frl1. Interacts weakly with frzb1 and strongly with frzb2/crescent. Interaction with frzb2/crescent antagonizes wnt11 function in the neuroectoderm, but enhances it in mesodermal tissue. Post-translationally, glycosylation is required for protein secretion. Palmitoleoylation is required for efficient binding to frizzled receptors. Depalmitoleoylation leads to Wnt signaling pathway inhibition.

The protein resides in the secreted. Its subcellular location is the extracellular space. It is found in the extracellular matrix. Its function is as follows. Ligand for the frizzled7 transmembrane receptor. Primarily acts via non-canonical Wnt pathways mediated by either Ca(2+) and PKC, or by JNK and dvl2/dsh. Depending on the cellular context, can also signal via the canonical Wnt pathway mediated by beta-catenin and dvl2/dsh. May also inhibit canonical Wnt signaling. Maternally initiates dorsal/ventral axis formation by a canonical route, which signals via lrp6. In a complex with wnt5a, activates the canonical and non-canonical processes involved in axis formation. In the non-canonical pathway, acts through fzd7/fz7 to induce phosphorylation of dvl2/dsh. Signals through a non-canonical Wnt pathway to regulate convergent extension movements during gastrulation. Interactions with the secreted Wnt antagonist sfrp5 to coordinate foregut development, acting via a non-canonical wnt pathway whereby sfrp5 restricts wnt11b activity to prevent inappropriate foregut formation. Mediates cardiogenesis via non-canonical Wnt signaling involving JNK-activation and PKC. Acts redundantly with wnt11/wnt11r during pronephros induction. The sequence is that of Protein Wnt-11b-1 from Xenopus tropicalis (Western clawed frog).